Reading from the N-terminus, the 159-residue chain is 2-C-methyl-D-erythritol 2,4-cyclodiphosphate synthase (159 aa).

Positions 10 and 12 each coordinate a divalent metal cation. Residues 10–12 and 36–37 each bind 4-CDP-2-C-methyl-D-erythritol 2-phosphate; these read DVH and HS. Residue histidine 44 coordinates a divalent metal cation. 4-CDP-2-C-methyl-D-erythritol 2-phosphate is bound by residues 58–60, 63–67, and arginine 144; these read DIG and FSDTD.

This sequence belongs to the IspF family. Homotrimer. A divalent metal cation is required as a cofactor.

The enzyme catalyses 4-CDP-2-C-methyl-D-erythritol 2-phosphate = 2-C-methyl-D-erythritol 2,4-cyclic diphosphate + CMP. It participates in isoprenoid biosynthesis; isopentenyl diphosphate biosynthesis via DXP pathway; isopentenyl diphosphate from 1-deoxy-D-xylulose 5-phosphate: step 4/6. Functionally, involved in the biosynthesis of isopentenyl diphosphate (IPP) and dimethylallyl diphosphate (DMAPP), two major building blocks of isoprenoid compounds. Catalyzes the conversion of 4-diphosphocytidyl-2-C-methyl-D-erythritol 2-phosphate (CDP-ME2P) to 2-C-methyl-D-erythritol 2,4-cyclodiphosphate (ME-CPP) with a corresponding release of cytidine 5-monophosphate (CMP). The polypeptide is 2-C-methyl-D-erythritol 2,4-cyclodiphosphate synthase (Paraburkholderia phytofirmans (strain DSM 17436 / LMG 22146 / PsJN) (Burkholderia phytofirmans)).